Reading from the N-terminus, the 548-residue chain is Probable thiamine biosynthetic bifunctional enzyme, chloroplastic (548 aa).

Polar residues predominate over residues methionine 1 to histidine 10. The segment at methionine 1 to arginine 40 is disordered. The N-terminal 47 residues, methionine 1–serine 47, are a transit peptide targeting the chloroplast. The span at proline 11–proline 28 shows a compositional bias: low complexity. 4-amino-2-methyl-5-(diphosphooxymethyl)pyrimidine is bound by residues glutamine 372–lysine 376 and asparagine 404. The Mg(2+) site is built by aspartate 405 and aspartate 424. A 4-amino-2-methyl-5-(diphosphooxymethyl)pyrimidine-binding site is contributed by serine 443. Residue threonine 469 to threonine 471 participates in 2-[(2R,5Z)-2-carboxy-4-methylthiazol-5(2H)-ylidene]ethyl phosphate binding. Lysine 472 contacts 4-amino-2-methyl-5-(diphosphooxymethyl)pyrimidine. Residues glycine 499 and valine 522–serine 523 each bind 2-[(2R,5Z)-2-carboxy-4-methylthiazol-5(2H)-ylidene]ethyl phosphate.

Belongs to the thiamine-phosphate synthase family. It depends on Mg(2+) as a cofactor.

The protein resides in the plastid. The protein localises to the chloroplast. It carries out the reaction 2-[(2R,5Z)-2-carboxy-4-methylthiazol-5(2H)-ylidene]ethyl phosphate + 4-amino-2-methyl-5-(diphosphooxymethyl)pyrimidine + 2 H(+) = thiamine phosphate + CO2 + diphosphate. The enzyme catalyses 2-(2-carboxy-4-methylthiazol-5-yl)ethyl phosphate + 4-amino-2-methyl-5-(diphosphooxymethyl)pyrimidine + 2 H(+) = thiamine phosphate + CO2 + diphosphate. It catalyses the reaction 4-methyl-5-(2-phosphooxyethyl)-thiazole + 4-amino-2-methyl-5-(diphosphooxymethyl)pyrimidine + H(+) = thiamine phosphate + diphosphate. The catalysed reaction is 4-amino-5-hydroxymethyl-2-methylpyrimidine + ATP = 4-amino-2-methyl-5-(phosphooxymethyl)pyrimidine + ADP + H(+). Its pathway is cofactor biosynthesis; thiamine diphosphate biosynthesis; thiamine phosphate from 4-amino-2-methyl-5-diphosphomethylpyrimidine and 4-methyl-5-(2-phosphoethyl)-thiazole: step 1/1. It participates in cofactor biosynthesis; thiamine diphosphate biosynthesis; 4-amino-2-methyl-5-diphosphomethylpyrimidine from 5-amino-1-(5-phospho-D-ribosyl)imidazole: step 2/3. In terms of biological role, essential for thiamine biosynthesis. Bifunctional enzyme that catalyzes the phosphorylation of hydroxymethylpyrimidine phosphate (HMP-P) to HMP-PP and condenses 4-methyl-5-(beta-hydroxyethyl)thiazole monophosphate (THZ-P) and 2-methyl-4-amino-5-hydroxymethyl pyrimidine pyrophosphate (HMP-PP) to form thiamine monophosphate (TMP). The polypeptide is Probable thiamine biosynthetic bifunctional enzyme, chloroplastic (Oryza sativa subsp. japonica (Rice)).